Reading from the N-terminus, the 367-residue chain is Anthranilate phosphoribosyltransferase (367 aa).

Over residues M1–A21 the composition is skewed to low complexity. Positions M1–W24 are disordered. 5-phospho-alpha-D-ribose 1-diphosphate-binding positions include G104, G107–D108, T112, N114–T117, K132–S140, and G144. G104 contributes to the anthranilate binding site. Mg(2+) is bound at residue S116. N135 is an anthranilate binding site. Residue R190 coordinates anthranilate. Mg(2+) contacts are provided by D248 and E249.

The protein belongs to the anthranilate phosphoribosyltransferase family. Homodimer. The cofactor is Mg(2+).

The enzyme catalyses N-(5-phospho-beta-D-ribosyl)anthranilate + diphosphate = 5-phospho-alpha-D-ribose 1-diphosphate + anthranilate. Its pathway is amino-acid biosynthesis; L-tryptophan biosynthesis; L-tryptophan from chorismate: step 2/5. Functionally, catalyzes the transfer of the phosphoribosyl group of 5-phosphorylribose-1-pyrophosphate (PRPP) to anthranilate to yield N-(5'-phosphoribosyl)-anthranilate (PRA). The protein is Anthranilate phosphoribosyltransferase of Mycolicibacterium paratuberculosis (strain ATCC BAA-968 / K-10) (Mycobacterium paratuberculosis).